A 125-amino-acid chain; its full sequence is Large ribosomal subunit protein bL12 (125 aa).

It belongs to the bacterial ribosomal protein bL12 family. Homodimer. Part of the ribosomal stalk of the 50S ribosomal subunit. Forms a multimeric L10(L12)X complex, where L10 forms an elongated spine to which 2 to 4 L12 dimers bind in a sequential fashion. Binds GTP-bound translation factors.

Its function is as follows. Forms part of the ribosomal stalk which helps the ribosome interact with GTP-bound translation factors. Is thus essential for accurate translation. This is Large ribosomal subunit protein bL12 from Afipia carboxidovorans (strain ATCC 49405 / DSM 1227 / KCTC 32145 / OM5) (Oligotropha carboxidovorans).